The chain runs to 262 residues: Type III pantothenate kinase (262 aa).

Residue 9 to 16 coordinates ATP; that stretch reads DIGNTNIV. Substrate is bound by residues tyrosine 103 and 110–113; that span reads GVDR. Catalysis depends on aspartate 112, which acts as the Proton acceptor. Aspartate 132 serves as a coordination point for K(+). Threonine 135 contributes to the ATP binding site. Threonine 187 is a substrate binding site.

This sequence belongs to the type III pantothenate kinase family. Homodimer. It depends on NH4(+) as a cofactor. Requires K(+) as cofactor.

The protein localises to the cytoplasm. The catalysed reaction is (R)-pantothenate + ATP = (R)-4'-phosphopantothenate + ADP + H(+). It participates in cofactor biosynthesis; coenzyme A biosynthesis; CoA from (R)-pantothenate: step 1/5. Functionally, catalyzes the phosphorylation of pantothenate (Pan), the first step in CoA biosynthesis. The polypeptide is Type III pantothenate kinase (Finegoldia magna (strain ATCC 29328 / DSM 20472 / WAL 2508) (Peptostreptococcus magnus)).